Reading from the N-terminus, the 171-residue chain is Inosine/xanthosine triphosphatase (171 aa).

Substrate is bound at residue 8-13 (TTNPAK). The Mg(2+) site is built by E38 and Q68.

This sequence belongs to the YjjX NTPase family. Homodimer. Mg(2+) serves as cofactor. The cofactor is Mn(2+).

The catalysed reaction is XTP + H2O = XDP + phosphate + H(+). The enzyme catalyses ITP + H2O = IDP + phosphate + H(+). Phosphatase that hydrolyzes non-canonical purine nucleotides such as XTP and ITP to their respective diphosphate derivatives. Probably excludes non-canonical purines from DNA/RNA precursor pool, thus preventing their incorporation into DNA/RNA and avoiding chromosomal lesions. The polypeptide is Inosine/xanthosine triphosphatase (yjjX) (Salmonella typhimurium (strain LT2 / SGSC1412 / ATCC 700720)).